The chain runs to 409 residues: Lissencephaly-1 homolog (409 aa).

Positions Gln7–Lys39 constitute a LisH domain. The stretch at Ser56–Gly81 forms a coiled coil. Positions Thr75–Asp92 are enriched in polar residues. A disordered region spans residues Thr75–Gly105. WD repeat units lie at residues Gly105–Arg146, Gly147–Thr186, Gly189–Asn228, Gly231–Glu270, Gly273–Ser332, Gly335–Ser374, and Ala377–Arg409.

This sequence belongs to the WD repeat LIS1/nudF family.

It localises to the cytoplasm. The protein localises to the cytoskeleton. Its subcellular location is the microtubule organizing center. It is found in the centrosome. In terms of biological role, positively regulates the activity of the minus-end directed microtubule motor protein dynein. May enhance dynein-mediated microtubule sliding by targeting dynein to the microtubule plus end. Required for several dynein- and microtubule-dependent processes. The chain is Lissencephaly-1 homolog from Trichoplax adhaerens (Trichoplax reptans).